A 910-amino-acid chain; its full sequence is Dynein axonemal assembly factor 1 homolog (910 aa).

LRR repeat units follow at residues 43-64 (GLKC…DHQS), 65-86 (QLRC…QHCK), 87-108 (QLDT…GSDI), 111-132 (VLNT…AELR), and 136-157 (FVSV…KVLA). An LRRCT domain is found at 171–209 (PVVNDIPSYRKTLILECKSLTYLDSRPVFDKDRACAEAW). Residues 217-230 (ERKEHQRWKKEEQR) are compositionally biased toward basic and acidic residues. Disordered regions lie at residues 217–275 (ERKE…GDFE), 297–332 (TKGD…DPTL), 344–399 (SRAC…GSIL), 620–642 (EQVP…PVDQ), 662–682 (QVEV…IPEE), and 855–910 (EELE…QGDH). A compositionally biased stretch (polar residues) spans 314-331 (STNSVDYITGSDSNSDPT). The segment covering 380–389 (SLSDSSSSSS) has biased composition (low complexity). A compositionally biased stretch (basic and acidic residues) spans 620–633 (EQVPDEVEANDKAS). A compositionally biased stretch (acidic residues) spans 855-865 (EELEELNEEED). Residues 866–878 (PALKEAGDFKHDE) are compositionally biased toward basic and acidic residues.

This sequence belongs to the DNAAF1 family.

It localises to the cell projection. The protein resides in the cilium. Its function is as follows. Cilium-specific protein required for cilia structures. The polypeptide is Dynein axonemal assembly factor 1 homolog (Anopheles gambiae (African malaria mosquito)).